The chain runs to 219 residues: Redox-sensing transcriptional repressor Rex (219 aa).

The H-T-H motif DNA-binding region spans 18–57 (LYYRFIQSLYNSGKLRVSSAELSEAVKVDSATIRRDFSYF). An NAD(+)-binding site is contributed by 92–97 (GVGHLG).

It belongs to the transcriptional regulatory Rex family. In terms of assembly, homodimer.

It localises to the cytoplasm. Modulates transcription in response to changes in cellular NADH/NAD(+) redox state. The protein is Redox-sensing transcriptional repressor Rex of Exiguobacterium sibiricum (strain DSM 17290 / CCUG 55495 / CIP 109462 / JCM 13490 / 255-15).